A 420-amino-acid polypeptide reads, in one-letter code: Reticulon-4 receptor-like 2 (420 aa).

The N-terminal stretch at M1–S30 is a signal peptide. 2 disulfide bridges follow: C31–C37 and C35–C46. An LRRNT domain is found at C31–P60. N-linked (GlcNAc...) asparagine glycosylation occurs at N50. LRR repeat units follow at residues S61–P82, N83–H104, A107–G129, R132–G153, S156–D177, N180–G201, S204–G225, and R228–D249. N93 is a glycosylation site (N-linked (GlcNAc...) asparagine). N236 is a glycosylation site (N-linked (GlcNAc...) asparagine). An LRRCT domain is found at N261 to P312. 2 disulfides stabilise this stretch: C265/C288 and C267/C310. The segment at V286 to C390 is disordered. Residues R294–D306 are compositionally biased toward basic and acidic residues. The tract at residues P315–S327 is important for interaction with MAG. Basic and acidic residues predominate over residues L351 to Q360. C390 is lipidated: GPI-anchor amidated cysteine. Positions Q391 to L420 are cleaved as a propeptide — removed in mature form.

The protein belongs to the Nogo receptor family. In terms of assembly, interaction with MAG is controversial, and may be indirect. Interacts with MAG. Does not interact with OMG and RTN4. Undergoes zinc metalloproteinase-mediated ectodomain shedding in neuroblastoma cells; is released both as a full-length ectodomain and an N-terminal fragment containing the leucine-rich repeat (LRR) region of the protein. In terms of processing, N-glycosylated. O-glycosylated. Contains terminal sialic acid groups on its glycan chains. As to expression, detected in adult brain, in neocortex, hippocampus, striatum and dorsal root ganglion neurons, and in retina (at protein level). In brain, detected in cerebral cortex and hippocampus. Weak or no expression detected in the cerebellum, thalamus or striatum.

It is found in the cell membrane. The protein localises to the cell projection. The protein resides in the dendrite. It localises to the perikaryon. Its subcellular location is the axon. It is found in the membrane raft. Functionally, cell surface receptor that plays a functionally redundant role in the inhibition of neurite outgrowth mediated by MAG. Plays a functionally redundant role in postnatal brain development. Contributes to normal axon migration across the brain midline and normal formation of the corpus callosum. Does not seem to play a significant role in regulating axon regeneration in the adult central nervous system. Protects motoneurons against apoptosis; protection against apoptosis is probably mediated by MAG. Like other family members, plays a role in restricting the number dendritic spines and the number of synapses that are formed during brain development. Signaling mediates activation of Rho and downstream reorganization of the actin cytoskeleton. The protein is Reticulon-4 receptor-like 2 of Rattus norvegicus (Rat).